Reading from the N-terminus, the 530-residue chain is Probable ATP-binding protein YbiT (530 aa).

2 consecutive ABC transporter domains span residues 2–252 (LVSS…ERLL) and 320–526 (LEVE…YLRS). Residues 34–41 (GANGSGKS) and 352–359 (GTNGVGKS) contribute to the ATP site.

Belongs to the ABC transporter superfamily. ABCF family. YbiT subfamily.

The protein is Probable ATP-binding protein YbiT (ybiT) of Escherichia coli O157:H7.